A 98-amino-acid polypeptide reads, in one-letter code: Putative pterin-4-alpha-carbinolamine dehydratase (98 aa).

This sequence belongs to the pterin-4-alpha-carbinolamine dehydratase family.

It carries out the reaction (4aS,6R)-4a-hydroxy-L-erythro-5,6,7,8-tetrahydrobiopterin = (6R)-L-erythro-6,7-dihydrobiopterin + H2O. The sequence is that of Putative pterin-4-alpha-carbinolamine dehydratase from Jannaschia sp. (strain CCS1).